Here is a 575-residue protein sequence, read N- to C-terminus: Phosphoenolpyruvate-protein phosphotransferase (575 aa).

Tyr122 is subject to Phosphotyrosine. His189 (tele-phosphohistidine intermediate) is an active-site residue. The phosphoenolpyruvate site is built by Arg296 and Arg332. Glu431 and Asp455 together coordinate Mg(2+). Phosphoenolpyruvate is bound by residues 454–455 (ND) and Arg465. Residue Cys502 is the Proton donor of the active site.

Belongs to the PEP-utilizing enzyme family. As to quaternary structure, homodimer. Interacts with the pole-localizer protein TmaR. Binding to TmaR is reversible as long as TmaR can get phosphorylated, whereas binding to non-phosphorylated TmaR is very strong and shifts the equilibrium toward binding. Mg(2+) serves as cofactor. Post-translationally, phosphorylated on Tyr-122. Phosphorylation on Tyr-122 is important for polar localization but not for interaction with TmaR and for activity.

Its subcellular location is the cytoplasm. It carries out the reaction L-histidyl-[protein] + phosphoenolpyruvate = N(pros)-phospho-L-histidyl-[protein] + pyruvate. Its activity is regulated as follows. Inhibited by oxalate. Functionally, general (non sugar-specific) component of the phosphoenolpyruvate-dependent sugar phosphotransferase system (sugar PTS). This major carbohydrate active-transport system catalyzes the phosphorylation of incoming sugar substrates concomitantly with their translocation across the cell membrane. Enzyme I transfers the phosphoryl group from phosphoenolpyruvate (PEP) to the phosphoryl carrier protein (HPr). Can also use (Z)-3-fluoro-PEP (ZFPEP), (Z)-3-methyl-PEP (ZMePEP), (Z)-3-chloro-PEP (ZClPEP) and (E)-3-chloro-PEP (EClPEP) as alternative phosphoryl donors. This Escherichia coli (strain K12) protein is Phosphoenolpyruvate-protein phosphotransferase.